The primary structure comprises 434 residues: ATP-dependent protease ATPase subunit HslU (434 aa).

ATP is bound by residues isoleucine 18, 60-65 (GVGKTE), aspartate 247, glutamate 312, and arginine 384.

It belongs to the ClpX chaperone family. HslU subfamily. A double ring-shaped homohexamer of HslV is capped on each side by a ring-shaped HslU homohexamer. The assembly of the HslU/HslV complex is dependent on binding of ATP.

Its subcellular location is the cytoplasm. Its function is as follows. ATPase subunit of a proteasome-like degradation complex; this subunit has chaperone activity. The binding of ATP and its subsequent hydrolysis by HslU are essential for unfolding of protein substrates subsequently hydrolyzed by HslV. HslU recognizes the N-terminal part of its protein substrates and unfolds these before they are guided to HslV for hydrolysis. This is ATP-dependent protease ATPase subunit HslU from Brucella anthropi (strain ATCC 49188 / DSM 6882 / CCUG 24695 / JCM 21032 / LMG 3331 / NBRC 15819 / NCTC 12168 / Alc 37) (Ochrobactrum anthropi).